The following is a 461-amino-acid chain: Lysosomal dipeptide transporter MFSD1 (461 aa).

The span at methionine 1 to glycine 13 shows a compositional bias: basic and acidic residues. The interval methionine 1–lysine 22 is disordered. The Dileucine internalization motif motif lies at leucine 10–leucine 11. The next 10 membrane-spanning stretches (helical) occupy residues leucine 37 to cysteine 57, glutamine 81 to leucine 101, threonine 111 to alanine 131, phenylalanine 134 to alanine 154, leucine 264 to leucine 284, alanine 302 to valine 322, tryptophan 331 to tryptophan 351, leucine 359 to valine 379, phenylalanine 390 to leucine 410, and leucine 416 to leucine 436.

This sequence belongs to the major facilitator superfamily. In terms of assembly, homodimer. Interacts with lysosomal protein GLMP (via lumenal domain); the interaction starts while both proteins are still in the endoplasmic reticulum and is required for stabilization of MFSD1 in lysosomes but has no direct effect on its targeting to lysosomes or transporter activity.

Its subcellular location is the lysosome membrane. The catalysed reaction is L-alpha-aminoacyl-L-arginine(out) = L-alpha-aminoacyl-L-arginine(in). It carries out the reaction L-arginyl-L-alpha-amino acid(out) = L-arginyl-L-alpha-amino acid(in). It catalyses the reaction L-arginyl-glycine(out) = L-arginyl-glycine(in). The enzyme catalyses L-alpha-aminoacyl-L-lysine(out) = L-alpha-aminoacyl-L-lysine(in). The catalysed reaction is L-aspartyl-L-lysine(out) = L-aspartyl-L-lysine(in). It carries out the reaction L-alanyl-L-lysine(out) = L-alanyl-L-lysine(in). It catalyses the reaction L-lysyl-L-alpha-amino acid(out) = L-lysyl-L-alpha-amino acid(in). The enzyme catalyses L-lysyl-L-alanine(out) = L-lysyl-L-alanine(in). The catalysed reaction is L-lysyl-L-lysine(out) = L-lysyl-L-lysine(in). It carries out the reaction L-lysyl-glycine(out) = L-lysyl-glycine(in). It catalyses the reaction L-alpha-aminoacyl-L-histidine(out) = L-alpha-aminoacyl-L-histidine(in). The enzyme catalyses L-histidyl-L-alpha-amino acid(out) = L-histidyl-L-alpha-amino acid(in). The catalysed reaction is L-histidyl-glycine(out) = L-histidyl-glycine(in). Functionally, lysosomal dipeptide uniporter that selectively exports lysine, arginine or histidine-containing dipeptides with a net positive charge from the lysosome lumen into the cytosol. Could play a role in a specific type of protein O-glycosylation indirectly regulating macrophages migration and tissue invasion. Also essential for liver homeostasis. The sequence is that of Lysosomal dipeptide transporter MFSD1 (mfsd1) from Danio rerio (Zebrafish).